The sequence spans 325 residues: Putative gluconeogenesis factor (325 aa).

The protein belongs to the gluconeogenesis factor family.

The protein resides in the cytoplasm. Functionally, required for morphogenesis under gluconeogenic growth conditions. The protein is Putative gluconeogenesis factor of Streptococcus pyogenes serotype M1.